The following is a 410-amino-acid chain: 45 kDa immediate-early protein 2 (410 aa).

Positions 36–166 are disordered; the sequence is SEEEQGEEVE…SKRISELDNE (131 aa). 3 stretches are compositionally biased toward low complexity: residues 47-67, 90-101, and 132-147; these read RGAT…TSPT, SSSSSSCSSASD, and AASS…SSGG. A zinc finger spans residues 257–283; sequence VRCRLGTMCNLALSTPFLMEHTMPVTH.

Activates the E1.7 promoter. This activation is augmented by the IE1 protein. It down-regulates the transcription of genes under the control of the major IE promoter. This chain is 45 kDa immediate-early protein 2 (UL122), found in Homo sapiens (Human).